The chain runs to 153 residues: Large ribosomal subunit protein uL13 (153 aa).

It belongs to the universal ribosomal protein uL13 family. Part of the 50S ribosomal subunit.

Its function is as follows. This protein is one of the early assembly proteins of the 50S ribosomal subunit, although it is not seen to bind rRNA by itself. It is important during the early stages of 50S assembly. In Xanthobacter autotrophicus (strain ATCC BAA-1158 / Py2), this protein is Large ribosomal subunit protein uL13.